Here is a 497-residue protein sequence, read N- to C-terminus: Glycerol kinase (497 aa).

Residue T12 coordinates ADP. Residues T12, T13, and S14 each coordinate ATP. Residue T12 coordinates sn-glycerol 3-phosphate. R16 is a binding site for ADP. 4 residues coordinate sn-glycerol 3-phosphate: R82, E83, Y134, and D243. Residues R82, E83, Y134, D243, and Q244 each coordinate glycerol. Residues T265 and G308 each coordinate ADP. The ATP site is built by T265, G308, Q312, and G409. G409 and N413 together coordinate ADP.

It belongs to the FGGY kinase family.

The enzyme catalyses glycerol + ATP = sn-glycerol 3-phosphate + ADP + H(+). Its pathway is polyol metabolism; glycerol degradation via glycerol kinase pathway; sn-glycerol 3-phosphate from glycerol: step 1/1. With respect to regulation, inhibited by fructose 1,6-bisphosphate (FBP). Key enzyme in the regulation of glycerol uptake and metabolism. Catalyzes the phosphorylation of glycerol to yield sn-glycerol 3-phosphate. The polypeptide is Glycerol kinase (Oleidesulfovibrio alaskensis (strain ATCC BAA-1058 / DSM 17464 / G20) (Desulfovibrio alaskensis)).